The primary structure comprises 724 residues: Golgin subfamily A member 6-like protein 6 (724 aa).

Disordered stretches follow at residues 1-108 (MLMW…HQEA), 314-342 (QEEK…MRRQ), 374-454 (MHEQ…EMWR), 517-548 (QEEM…KMWR), and 561-724 (WRQE…MQEH). Residues 15–29 (LPTHPHLPTHPHLPT) show a composition bias toward basic residues. The span at 39-60 (MSKETRQSKLAEAKEQLTDHHP) shows a compositional bias: basic and acidic residues. Composition is skewed to polar residues over residues 61–71 (QTNPSVGTAAS) and 79–91 (NNGT…TSGG). Residues 94–108 (SPEDEQKASHQHQEA) are compositionally biased toward basic and acidic residues. A coiled-coil region spans residues 164–686 (ELEQALSAVA…EKMWEQEEKM (523 aa)).

The protein belongs to the GOLGA6 family.

The chain is Golgin subfamily A member 6-like protein 6 (GOLGA6L6) from Homo sapiens (Human).